Consider the following 545-residue polypeptide: ATP synthase subunit alpha (545 aa).

173–180 contacts ATP; the sequence is GDRQTGKS.

Belongs to the ATPase alpha/beta chains family. As to quaternary structure, F-type ATPases have 2 components, CF(1) - the catalytic core - and CF(0) - the membrane proton channel. CF(1) has five subunits: alpha(3), beta(3), gamma(1), delta(1), epsilon(1). CF(0) has three main subunits: a(1), b(2) and c(9-12). The alpha and beta chains form an alternating ring which encloses part of the gamma chain. CF(1) is attached to CF(0) by a central stalk formed by the gamma and epsilon chains, while a peripheral stalk is formed by the delta and b chains.

It localises to the cell membrane. It carries out the reaction ATP + H2O + 4 H(+)(in) = ADP + phosphate + 5 H(+)(out). In terms of biological role, produces ATP from ADP in the presence of a proton gradient across the membrane. The alpha chain is a regulatory subunit. This is ATP synthase subunit alpha from Arthrobacter sp. (strain FB24).